The primary structure comprises 269 residues: MNEICDTAVCMPDVQSSADTRQIAIDKVGIKSIRHPVRVADKADGVQHTIANFNMYVFLPHNFKGTHMSRFIEILNTREREISVENFEGMLRQMVERLEAESGYIEMTFPYFINKSAPVSGVQSMLDYEVTFVGAIENGQYTHTTKVVVPVTSLCPCSKKISEYGAHNQRSHVTVTAKTRGFLWIEDLVRKVEDQASCELFGLLKRPDEKYVTERAYDNPKFVEDIVRDVAAAMNAEPLIDAYVVEAENFESIHNHSAYALIEHDKRKK.

The protein belongs to the GTP cyclohydrolase IV family.

It carries out the reaction GTP + H2O = 7,8-dihydroneopterin 3'-triphosphate + formate + H(+). Its pathway is cofactor biosynthesis; 7,8-dihydroneopterin triphosphate biosynthesis; 7,8-dihydroneopterin triphosphate from GTP: step 1/1. In terms of biological role, converts GTP to 7,8-dihydroneopterin triphosphate. The sequence is that of GTP cyclohydrolase FolE2 from Thiobacillus denitrificans (strain ATCC 25259 / T1).